We begin with the raw amino-acid sequence, 213 residues long: Serine acetyltransferase (213 aa).

It belongs to the transferase hexapeptide repeat family.

It localises to the cytoplasm. It catalyses the reaction L-serine + acetyl-CoA = O-acetyl-L-serine + CoA. It participates in amino-acid biosynthesis; L-cysteine biosynthesis; L-cysteine from L-serine: step 1/2. This Staphylococcus epidermidis (strain ATCC 35984 / DSM 28319 / BCRC 17069 / CCUG 31568 / BM 3577 / RP62A) protein is Serine acetyltransferase (cysE).